The following is a 3085-amino-acid chain: Genome polyprotein (3085 aa).

Residues 170–313 enclose the Peptidase S30 domain; sequence LVAKSDFDDL…AGDVGRTMHY (144 aa). Catalysis depends on for P1 proteinase activity residues His224, Glu233, and Ser266. The Involved in interaction with stylet and aphid transmission signature appears at 365 to 368; the sequence is KMAC. The Involved in virions binding and aphid transmission signature appears at 622–624; the sequence is PTK. The region spanning 648–770 is the Peptidase C6 domain; the sequence is MYIAKEGYCY…EGEMKWYRVG (123 aa). Residues Cys656 and His729 each act as for helper component proteinase activity in the active site. Residues 1241-1393 enclose the Helicase ATP-binding domain; it reads TICASSEQEF…TQHDVLIKIE (153 aa). 1254 to 1261 contributes to the ATP binding site; sequence GAVGSGKS. A DESH box motif is present at residues 1343–1346; that stretch reads DESH. The Helicase C-terminal domain occupies 1412–1571; the sequence is DVVQNGDNIL…NLPVMTHNVT (160 aa). Positions 1895 to 1904 match the Nuclear localization signal motif; it reads ERGKRKGNNS. Tyr1919 is modified (O-(5'-phospho-RNA)-tyrosine). A Peptidase C4 domain is found at 2047-2266; it reads GKSIVKGLRN…VAWNGMTLRE (220 aa). Catalysis depends on for nuclear inclusion protein A activity residues His2092, Asp2127, and Cys2198. A RdRp catalytic domain is found at 2535-2659; sequence WIYCDADGSQ…AIYPSKEKFL (125 aa). Residues 2801–2869 form a disordered region; that stretch reads DGPDIVTYQG…STAVPRLKQI (69 aa). Positions 2816–2831 are enriched in low complexity; the sequence is KSSQPQSSSPQVPQQV. Basic and acidic residues predominate over residues 2839 to 2855; sequence GRDKQSVIKHDSTKSKD. Thr3068 is modified (phosphothreonine).

Belongs to the potyviridae genome polyprotein family. As to quaternary structure, interacts with host eIF4E protein (via cap-binding region); this interaction mediates the translation of the VPg-viral RNA conjugates. Part of a complex that comprises VPg, RNA, host EIF4E and EIF4G; this interaction mediates the translation of the VPg-viral RNA conjugates. VPg is uridylylated by the polymerase and is covalently attached to the 5'-end of the genomic RNA. This uridylylated form acts as a nucleotide-peptide primer for the polymerase. In terms of processing, potyviral RNA is expressed as two polyproteins which undergo post-translational proteolytic processing. Genome polyprotein is processed by NIa-pro, P1 and HC-pro proteinases resulting in the production of at least ten individual proteins. P3N-PIPO polyprotein is cleaved by P1 and HC-pro proteinases resulting in the production of three individual proteins. The P1 proteinase and the HC-pro cleave only their respective C-termini autocatalytically. 6K1 is essential for proper proteolytic separation of P3 from CI.

Its subcellular location is the host cytoplasmic vesicle. It localises to the host nucleus. It is found in the virion. It catalyses the reaction RNA(n) + a ribonucleoside 5'-triphosphate = RNA(n+1) + diphosphate. It carries out the reaction Hydrolyzes glutaminyl bonds, and activity is further restricted by preferences for the amino acids in P6 - P1' that vary with the species of potyvirus, e.g. Glu-Xaa-Xaa-Tyr-Xaa-Gln-|-(Ser or Gly) for the enzyme from tobacco etch virus. The natural substrate is the viral polyprotein, but other proteins and oligopeptides containing the appropriate consensus sequence are also cleaved.. The catalysed reaction is Hydrolyzes a Gly-|-Gly bond at its own C-terminus, commonly in the sequence -Tyr-Xaa-Val-Gly-|-Gly, in the processing of the potyviral polyprotein.. Functionally, required for aphid transmission and also has proteolytic activity. Only cleaves a Gly-Gly dipeptide at its own C-terminus. Interacts with virions and aphid stylets. Acts as a suppressor of RNA-mediated gene silencing, also known as post-transcriptional gene silencing (PTGS), a mechanism of plant viral defense that limits the accumulation of viral RNAs. May have RNA-binding activity. Has helicase activity. It may be involved in replication. Its function is as follows. Indispensable for virus replication. Reduces the abundance of host transcripts related to jasmonic acid biosynthesis therefore altering the host defenses. In order to increase its own stability, decreases host protein degradation pathways. In terms of biological role, indispensable for virus replication. Functionally, mediates the cap-independent, EIF4E-dependent translation of viral genomic RNAs. Binds to the cap-binding site of host EIF4E and thus interferes with the host EIF4E-dependent mRNA export and translation. VPg-RNA directly binds EIF4E and is a template for transcription. Also forms trimeric complexes with EIF4E-EIF4G, which are templates for translation. Has RNA-binding and proteolytic activities. Its function is as follows. An RNA-dependent RNA polymerase that plays an essential role in the virus replication. In terms of biological role, involved in aphid transmission, cell-to-cell and systemis movement, encapsidation of the viral RNA and in the regulation of viral RNA amplification. In Beet mosaic virus (BtMV), this protein is Genome polyprotein.